The sequence spans 487 residues: L-tartrate/succinate antiporter (487 aa).

14 helical membrane-spanning segments follow: residues 10–30 (YLAP…AGLE), 33–53 (TWLY…EPVP), 54–74 (GAVV…WLLF), 93–113 (WAVS…FMFG), 137–157 (TLFL…VTPS), 189–209 (IGSY…AIFL), 236–256 (FLGM…LAYV), 292–312 (LMVG…AAMV), 313–333 (GYSV…DIVS), 340–360 (VFFW…TGFI), 370–390 (SLSG…FYLL), 393–413 (FFAS…AAAL), 418–438 (IPLP…SILT), and 465–485 (IFGL…MPVV).

Belongs to the SLC13A/DASS transporter (TC 2.A.47) family. DIT1 subfamily.

The protein localises to the cell inner membrane. The catalysed reaction is (2R,3R)-tartrate(out) + succinate(in) = (2R,3R)-tartrate(in) + succinate(out). Its function is as follows. Catalyzes the uptake of tartrate in exchange for intracellular succinate. Essential for anaerobic L-tartrate fermentation. The protein is L-tartrate/succinate antiporter (ttdT) of Escherichia coli O6:K15:H31 (strain 536 / UPEC).